Here is a 538-residue protein sequence, read N- to C-terminus: MLSKRIVTALNTAVKVQNAGIATTARGMAGASGSEVSKILEERILGTETGINLEETGKVLSIGDGIARVYGLKNIQAEEMVEFDSGIKGMAMNLDVDNVGVVVFGNDKVIREGDIVKRTGAIVDVPVGDGLLGRVVDALGNPIDGKGPIANARRSRVEVKAPGIIPRLSVREPMVTGVKAVDSLVPIGRGQRELIIGDRQTGKTAIAIDTIINQKRFNDAGDDKKKLFCIYVAVGQKRSTVAQIVKRLTDAGAMDYTIVVSATASDAAPLQFLAPYSGCAMGEHFRDNGKHALIIFDDLSKQAVAYRQMSLLLRRPPGREAYPGDVFYLHSRLLERAAKMNNSLGGGSLTALPVIETQAGDVSAYIPTNVISITDGQIFLETELFYKGVRPAINVGLSVSRVGSAAQTKAMKQVAGSMKLELAQYREVAAFAQFGSDLDASTQQLLNRGVRLTELLKQGQYVPMGIEEQVGVIYAGVKGYLDKVDPSAITKFEKEFLAHLRSSQQALLKTIREEGQISPQTDAQLKDVVVNFLATFKP.

197 to 204 (GDRQTGKT) is a binding site for ATP. The tract at residues 228–248 (FCIYVAVGQKRSTVAQIVKRL) is essential and sufficient for enterobactin binding.

The protein belongs to the ATPase alpha/beta chains family. As to quaternary structure, subunit of the F-type ATPase which has 2 components, CF(1) - the catalytic core - and CF(0) - the membrane proton channel. As to expression, ubiquitous (at protein level).

It localises to the mitochondrion. The protein resides in the mitochondrion inner membrane. Mitochondrial membrane ATP synthase (F(1)F(0) ATP synthase or Complex V) produces ATP from ADP in the presence of a proton gradient across the membrane which is generated by electron transport complexes of the respiratory chain. F-type ATPases consist of two structural domains, F(1) - containing the extramembraneous catalytic core, and F(0) - containing the membrane proton channel, linked together by a central stalk and a peripheral stalk. During catalysis, ATP synthesis in the catalytic domain of F(1) is coupled via a rotary mechanism of the central stalk subunits to proton translocation. Subunits alpha and beta form the catalytic core in F(1). Rotation of the central stalk against the surrounding subunits leads to hydrolysis of ATP in three separate catalytic sites on the beta subunits. Subunit alpha does not bear the catalytic high-affinity ATP-binding sites. Binds the bacterial siderophore enterobactin and is required for the assimilation of enterobactin-bound iron from non-pathogenic bacteria. Promotes mitochondrial accumulation of enterobactin-derived iron ions. The protein is ATP synthase subunit alpha, mitochondrial of Caenorhabditis elegans.